The sequence spans 401 residues: Tyrosine--tRNA ligase (401 aa).

Residues 43-52 (PTAPDLHLGH) carry the 'HIGH' region motif. A 'KMSKS' region motif is present at residues 227 to 231 (KMSKS). Position 230 (K230) interacts with ATP. The S4 RNA-binding domain occupies 338-399 (MAIGNVLKEA…GKRRFAKINL (62 aa)).

Belongs to the class-I aminoacyl-tRNA synthetase family. TyrS type 2 subfamily. As to quaternary structure, homodimer.

The protein localises to the cytoplasm. The enzyme catalyses tRNA(Tyr) + L-tyrosine + ATP = L-tyrosyl-tRNA(Tyr) + AMP + diphosphate + H(+). In terms of biological role, catalyzes the attachment of tyrosine to tRNA(Tyr) in a two-step reaction: tyrosine is first activated by ATP to form Tyr-AMP and then transferred to the acceptor end of tRNA(Tyr). This is Tyrosine--tRNA ligase from Idiomarina loihiensis (strain ATCC BAA-735 / DSM 15497 / L2-TR).